The primary structure comprises 323 residues: Putative CRISPR-associated protein SSO1401 (323 aa).

As to quaternary structure, sometimes seen associated with the aCascade ribonucleoprotein complex, minimally composed of Csa2 and Cas5a, which binds crRNA. Other probable components of aCascade in strain P1 are Cas6 and Csa5, while SSO1399, Cas5b (SSO1400) and SSO1401 have sometimes been seen weakly associated. The Csa2-Cas5a-crRNA complex also binds target DNA homologous to crRNA, probably forming an R-loop. Purified aCascade forms a filament about 6 nm in width.

CRISPR (clustered regularly interspaced short palindromic repeat) is an adaptive immune system that provides protection against mobile genetic elements (viruses, transposable elements and conjugative plasmids). CRISPR clusters contain spacers, sequences complementary to antecedent mobile elements, and target invading nucleic acids. CRISPR clusters are transcribed and processed into CRISPR RNA (crRNA). This is Putative CRISPR-associated protein SSO1401 from Saccharolobus solfataricus (strain ATCC 35092 / DSM 1617 / JCM 11322 / P2) (Sulfolobus solfataricus).